Consider the following 380-residue polypeptide: tRNA (guanine(26)-N(2))-dimethyltransferase (380 aa).

The Trm1 methyltransferase domain maps to 2–374 (ITVNEGSVTI…AGIGEIEEVL (373 aa)). Residues Arg-35, Arg-65, Asp-83, Asp-109, and Ala-110 each coordinate S-adenosyl-L-methionine. 4 residues coordinate Zn(2+): Cys-242, Cys-245, Cys-261, and Cys-264.

Belongs to the class I-like SAM-binding methyltransferase superfamily. Trm1 family.

It carries out the reaction guanosine(26) in tRNA + 2 S-adenosyl-L-methionine = N(2)-dimethylguanosine(26) in tRNA + 2 S-adenosyl-L-homocysteine + 2 H(+). Functionally, dimethylates a single guanine residue at position 26 of a number of tRNAs using S-adenosyl-L-methionine as donor of the methyl groups. This chain is tRNA (guanine(26)-N(2))-dimethyltransferase, found in Methanothermobacter thermautotrophicus (strain ATCC 29096 / DSM 1053 / JCM 10044 / NBRC 100330 / Delta H) (Methanobacterium thermoautotrophicum).